The chain runs to 449 residues: Chromosomal replication initiator protein DnaA (449 aa).

Positions 1–73 (MDADLKNLWD…ANSIKAVCSK (73 aa)) are domain I, interacts with DnaA modulators. A domain II region spans residues 73 to 110 (KLYTIEFIIMSEIYEKEEIKSSSNQKSKAIVVNDEMSS). The domain III, AAA+ region stretch occupies residues 111–327 (TLNPKYTFNS…GALIRIIAYS (217 aa)). 4 residues coordinate ATP: G155, G157, K158, and T159. The tract at residues 328 to 449 (SLTNREVTVD…NDITKKLTQN (122 aa)) is domain IV, binds dsDNA.

Belongs to the DnaA family. As to quaternary structure, oligomerizes as a right-handed, spiral filament on DNA at oriC.

The protein localises to the cytoplasm. Functionally, plays an essential role in the initiation and regulation of chromosomal replication. ATP-DnaA binds to the origin of replication (oriC) to initiate formation of the DNA replication initiation complex once per cell cycle. Binds the DnaA box (a 9 base pair repeat at the origin) and separates the double-stranded (ds)DNA. Forms a right-handed helical filament on oriC DNA; dsDNA binds to the exterior of the filament while single-stranded (ss)DNA is stabiized in the filament's interior. The ATP-DnaA-oriC complex binds and stabilizes one strand of the AT-rich DNA unwinding element (DUE), permitting loading of DNA polymerase. After initiation quickly degrades to an ADP-DnaA complex that is not apt for DNA replication. Binds acidic phospholipids. The sequence is that of Chromosomal replication initiator protein DnaA from Clostridium beijerinckii (strain ATCC 51743 / NCIMB 8052) (Clostridium acetobutylicum).